Here is a 170-residue protein sequence, read N- to C-terminus: Acetyl-CoA decarbonylase/synthase complex subunit epsilon 1 (170 aa).

This sequence belongs to the CdhB family. As to quaternary structure, heterotetramer of two alpha and two epsilon subunits. The ACDS complex is made up of alpha, epsilon, beta, gamma and delta subunits with a probable stoichiometry of (alpha(2)epsilon(2))(4)-beta(8)-(gamma(1)delta(1))(8).

It functions in the pathway one-carbon metabolism; methanogenesis from acetate. Part of a complex that catalyzes the reversible cleavage of acetyl-CoA, allowing growth on acetate as sole source of carbon and energy. The alpha-epsilon subcomponent functions as a carbon monoxide dehydrogenase. The precise role of the epsilon subunit is unclear; it may have a stabilizing role within the alpha(2)epsilon(2) component and/or be involved in electron transfer to FAD during a potential FAD-mediated CO oxidation. In Methanosarcina thermophila, this protein is Acetyl-CoA decarbonylase/synthase complex subunit epsilon 1 (cdhB1).